A 184-amino-acid polypeptide reads, in one-letter code: NADH-quinone oxidoreductase subunit B 2 (184 aa).

Cysteine 59, cysteine 60, cysteine 125, and cysteine 153 together coordinate [4Fe-4S] cluster.

Belongs to the complex I 20 kDa subunit family. As to quaternary structure, NDH-1 is composed of 14 different subunits. Subunits NuoB, C, D, E, F, and G constitute the peripheral sector of the complex. Requires [4Fe-4S] cluster as cofactor.

It is found in the cell inner membrane. The enzyme catalyses a quinone + NADH + 5 H(+)(in) = a quinol + NAD(+) + 4 H(+)(out). Functionally, NDH-1 shuttles electrons from NADH, via FMN and iron-sulfur (Fe-S) centers, to quinones in the respiratory chain. Couples the redox reaction to proton translocation (for every two electrons transferred, four hydrogen ions are translocated across the cytoplasmic membrane), and thus conserves the redox energy in a proton gradient. The protein is NADH-quinone oxidoreductase subunit B 2 of Solibacter usitatus (strain Ellin6076).